Reading from the N-terminus, the 110-residue chain is Transcription factor S (110 aa).

Zn(2+) is bound by residues Cys-4, Cys-7, Cys-22, Cys-25, Cys-71, Cys-74, Cys-99, and Cys-102. A TFIIS-type zinc finger spans residues 67-107 (TKVTCPKCGNDTAYWWEMQTRAGDEPSTIFYKCTKCGYTWR).

This sequence belongs to the archaeal rpoM/eukaryotic RPA12/RPB9/RPC11 RNA polymerase family.

Its subcellular location is the chromosome. Its function is as follows. Involved in transcriptional proofreading and fidelity. Induces RNA cleavage activity in RNA polymerase (RNAP). Stimulates transcription elongation by RNAP on both naked DNA and histone-bound DNA (chromatin), facilitating transcription through the histone barrier. Stimulation depends on transcript cleavage. In the presence of TFS, the cleavage activity of RNAP truncates RNA back to position +15 in a stepwise manner by releasing mainly dinucleotides from the 3'-end of the nascent RNA. The truncated RNAs are able to continue elongation. Misincorporation of nucleotides during elongation of transcription leads to arrested elongation complexes which are rescued by TFS-promoted removal of a dinucleotide from the 3'-end. TFS is able to induce a cleavage resynthesis cycle in stalled elongation complexes (resulting from the next missing nucleotide or a reduced incorporation rate of a wrong nucleotide) preventing misincorporation and enabling proofreading in a post-incorporation manner. Pausing of elongation complexes is the main determinant of TFS-induced RNA cleavage. This chain is Transcription factor S, found in Thermococcus kodakarensis (strain ATCC BAA-918 / JCM 12380 / KOD1) (Pyrococcus kodakaraensis (strain KOD1)).